Consider the following 66-residue polypeptide: Large ribosomal subunit protein bL31 (66 aa).

Zn(2+)-binding residues include cysteine 16, cysteine 18, cysteine 36, and cysteine 39.

It belongs to the bacterial ribosomal protein bL31 family. Type A subfamily. Part of the 50S ribosomal subunit. Zn(2+) is required as a cofactor.

Its function is as follows. Binds the 23S rRNA. This is Large ribosomal subunit protein bL31 from Campylobacter hominis (strain ATCC BAA-381 / DSM 21671 / CCUG 45161 / LMG 19568 / NCTC 13146 / CH001A).